The following is a 410-amino-acid chain: Metal tolerance protein 3 (410 aa).

The tract at residues 1–58 is disordered; that stretch reads MDGDDRRTPLLGGEGGSTRPPSLRRRDSARSLRSTFLSRLPDKVRGGGDPERPAADVD. Over 1–114 the chain is Cytoplasmic; sequence MDGDDRRTPL…EDKEQKQSES (114 aa). Over residues 40 to 58 the composition is skewed to basic and acidic residues; it reads LPDKVRGGGDPERPAADVD. The helical transmembrane segment at 115–135 threads the bilayer; it reads AMKISNYANIILLVFKVYATI. Residues 136 to 140 are Vacuolar-facing; the sequence is KTGSM. A helical transmembrane segment spans residues 141–161; that stretch reads AIAASTLDSLLDFLAGGILYF. At 162 to 184 the chain is on the cytoplasmic side; sequence THLTMKSVNIYKYPIGKLRVQPV. A helical membrane pass occupies residues 185–205; sequence GIIVFAAIMATLGFQVLIQAI. Topologically, residues 206–221 are vacuolar; sequence EQLVENKAGEKMTPEQ. Residues 222 to 242 form a helical membrane-spanning segment; that stretch reads LIWLYSIMLSATVVKLALYIY. Residues 243-258 lie on the Cytoplasmic side of the membrane; that stretch reads CRSSGNSIVQAYAKDH. Residues 259–275 form a helical membrane-spanning segment; that stretch reads YFDVVTNVVGLVAAVLG. Over 276–284 the chain is Vacuolar; it reads DKFFWWIDP. A helical transmembrane segment spans residues 285–303; that stretch reads VGAVLLAVYTIVNWSGTVY. At 304–410 the chain is on the cytoplasmic side; the sequence is ENAVTLVGQC…VRSRLPSTEP (107 aa).

Belongs to the cation diffusion facilitator (CDF) transporter (TC 2.A.4) family. SLC30A subfamily.

The protein localises to the vacuole membrane. Functionally, involved in sequestration of excess metal in the cytoplasm into vacuoles to maintain metal homeostasis. This is Metal tolerance protein 3 (MTP3) from Oryza sativa subsp. japonica (Rice).